The chain runs to 153 residues: Ribosome maturation factor RimP (153 aa).

It belongs to the RimP family.

The protein localises to the cytoplasm. In terms of biological role, required for maturation of 30S ribosomal subunits. The sequence is that of Ribosome maturation factor RimP from Vesicomyosocius okutanii subsp. Calyptogena okutanii (strain HA).